Reading from the N-terminus, the 35-residue chain is Pheromone-binding protein (35 aa).

The protein belongs to the PBP/GOBP family. Antenna.

In terms of biological role, this major soluble protein in olfactory sensilla of male moths might serve to solubilize the extremely hydrophobic pheromone molecules and to transport pheromone through the aqueous lymph to receptors located on olfactory cilia. The chain is Pheromone-binding protein from Hyalophora cecropia (Cecropia moth).